A 298-amino-acid polypeptide reads, in one-letter code: Glyoxalase domain-containing protein 4 (298 aa).

The VOC 1 domain occupies 5 to 130 (RALHFVFKVG…GGYKFYLQDR (126 aa)). N6-succinyllysine is present on lysine 109. The residue at position 131 (serine 131) is a Phosphoserine. A VOC 2 domain is found at 137–258 (PVLKVTLAVS…DGHEICFVGD (122 aa)). N6-succinyllysine is present on lysine 273.

The protein belongs to the glyoxalase I family. As to quaternary structure, interacts with NUDT9.

It localises to the mitochondrion. The polypeptide is Glyoxalase domain-containing protein 4 (Glod4) (Rattus norvegicus (Rat)).